The following is a 1496-amino-acid chain: Synaptojanin-2 (1496 aa).

The 325-residue stretch at 120-444 (LKKILSSGVF…GHGLSKVFTG (325 aa)) folds into the SAC domain. The region spanning 906–985 (DATVIVNLQS…RAVKIRPKTK (80 aa)) is the RRM domain. 6 disordered regions span residues 1047–1083 (VVSD…HPTY), 1100–1149 (GNFR…GTHG), 1205–1357 (VPES…LQVL), 1393–1413 (SSAI…AASF), 1442–1461 (EPLD…SAQV), and 1468–1496 (RGLP…TLGV). Residues 1063–1074 (SASTPASKSPAL) are compositionally biased toward low complexity. Residues 1116–1130 (RPRPPHPPQRPPPPT) are compositionally biased toward pro residues. Phosphoserine is present on S1139. The segment covering 1139–1149 (SDASISSGTHG) has biased composition (polar residues). Composition is skewed to pro residues over residues 1230–1239 (PVLPRRPVPR) and 1279–1292 (TPPP…PVPK). Low complexity predominate over residues 1324-1338 (ELSSPEAPEAPSLAP). Basic and acidic residues-rich tracts occupy residues 1470–1480 (LPPDHGGKDFS) and 1487–1496 (NKDKRTTLGV).

The protein belongs to the synaptojanin family. It in the central section; belongs to the inositol 1,4,5-trisphosphate 5-phosphatase family. As to quaternary structure, binds to GRB2. Isoform 2A binds to SYNJ2BP/OMP25. Widely expressed. Isoforms 2B1 and 2B2 are concentrated at nerve terminals in brain and at spermatid manchette in testis.

Its subcellular location is the cytoplasm. The protein localises to the cell membrane. It localises to the presynapse. The protein resides in the cytoskeleton. It is found in the membrane raft. Its subcellular location is the mitochondrion. It catalyses the reaction a 1,2-diacyl-sn-glycero-3-phospho-(1D-myo-inositol-4,5-bisphosphate) + H2O = a 1,2-diacyl-sn-glycero-3-phospho-(1D-myo-inositol 4-phosphate) + phosphate. Its function is as follows. Inositol 5-phosphatase which may be involved in distinct membrane trafficking and signal transduction pathways. May mediate the inhibitory effect of Rac1 on endocytosis. The chain is Synaptojanin-2 (Synj2) from Rattus norvegicus (Rat).